Here is a 1045-residue protein sequence, read N- to C-terminus: Translation initiation factor IF-2 (1045 aa).

Disordered stretches follow at residues 1–169 (MSDE…AQAP) and 184–451 (QAPA…RGGP). A compositionally biased stretch (gly residues) spans 83-94 (SGGGGSSAGGLS). Basic and acidic residues predominate over residues 103-123 (RAIEAAREHQERQAAERRAAE). Residues 124–151 (ARAASEAAAARDAAAKSAAAAKAAAAPA) are compositionally biased toward low complexity. Residues 152–163 (PEAPAAPAPTPA) are compositionally biased toward pro residues. Residues 184 to 199 (QAPAAPVAAAPAAPRA) show a composition bias toward low complexity. Composition is skewed to basic and acidic residues over residues 227-237 (EPSRDRRDDRS) and 302-323 (RNDR…RPQG). Pro residues predominate over residues 338 to 348 (RPAPGARPGPG). Residues 352–363 (GARPGVPASAPA) show a composition bias toward low complexity. 2 stretches are compositionally biased toward basic and acidic residues: residues 381-393 (VGRK…DRRK) and 438-450 (RARE…RRGG). Positions 540–710 (PRPPVVTVMG…LLLAEVMDLK (171 aa)) constitute a tr-type G domain. The G1 stretch occupies residues 549–556 (GHVDHGKT). 549–556 (GHVDHGKT) contributes to the GTP binding site. The segment at 574–578 (GITQH) is G2. The segment at 596 to 599 (DTPG) is G3. GTP-binding positions include 596–600 (DTPGH) and 650–653 (NKMD). Positions 650–653 (NKMD) are G4. The segment at 686–688 (SAK) is G5.

Belongs to the TRAFAC class translation factor GTPase superfamily. Classic translation factor GTPase family. IF-2 subfamily.

It localises to the cytoplasm. One of the essential components for the initiation of protein synthesis. Protects formylmethionyl-tRNA from spontaneous hydrolysis and promotes its binding to the 30S ribosomal subunits. Also involved in the hydrolysis of GTP during the formation of the 70S ribosomal complex. The polypeptide is Translation initiation factor IF-2 (Caulobacter sp. (strain K31)).